The following is a 179-amino-acid chain: Inner membrane-spanning protein YciB (179 aa).

Helical transmembrane passes span F3–Y23, P49–H69, W76–W96, V121–F141, and F149–L169.

Belongs to the YciB family.

The protein resides in the cell inner membrane. Its function is as follows. Plays a role in cell envelope biogenesis, maintenance of cell envelope integrity and membrane homeostasis. The polypeptide is Inner membrane-spanning protein YciB (Cupriavidus metallidurans (strain ATCC 43123 / DSM 2839 / NBRC 102507 / CH34) (Ralstonia metallidurans)).